The chain runs to 98 residues: NADH-ubiquinone oxidoreductase chain 4L (98 aa).

Helical transmembrane passes span 1-21 (MPVI…GLLI), 29-49 (SLLC…TLAL), and 61-81 (IILL…LVMV).

It belongs to the complex I subunit 4L family. In terms of assembly, core subunit of respiratory chain NADH dehydrogenase (Complex I) which is composed of 45 different subunits.

The protein resides in the mitochondrion inner membrane. It carries out the reaction a ubiquinone + NADH + 5 H(+)(in) = a ubiquinol + NAD(+) + 4 H(+)(out). Functionally, core subunit of the mitochondrial membrane respiratory chain NADH dehydrogenase (Complex I) which catalyzes electron transfer from NADH through the respiratory chain, using ubiquinone as an electron acceptor. Part of the enzyme membrane arm which is embedded in the lipid bilayer and involved in proton translocation. The polypeptide is NADH-ubiquinone oxidoreductase chain 4L (MT-ND4L) (Echinops telfairi (Lesser hedgehog tenrec)).